Reading from the N-terminus, the 52-residue chain is Phospholamban (52 aa).

M1 is subject to N-acetylmethionine. Over 1–31 the chain is Cytoplasmic; the sequence is MEKVQYITRSALRRASTLEVNPQARQRLQEL. Phosphoserine; by PKA is present on S16. A Phosphothreonine; by CaMK modification is found at T17. The chain crosses the membrane as a helical span at residues 32–52; sequence FVNFCLILICLLLICIIVMLL.

It belongs to the phospholamban family. As to quaternary structure, homopentamer. In terms of processing, phosphorylated in response to beta-adrenergic stimulation. Phosphorylation by PKA abolishes the inhibition of ATP2A2-mediated calcium uptake. As to expression, heart.

It localises to the endoplasmic reticulum membrane. The protein resides in the sarcoplasmic reticulum membrane. The protein localises to the mitochondrion membrane. Its subcellular location is the membrane. In terms of biological role, reversibly inhibits the activity of ATP2A2/SERCA2 in cardiac sarcoplasmic reticulum by decreasing the apparent affinity of the ATPase for Ca(2+). Binds preferentially to the ATP-bound E1 conformational form of ATP2A2 which predominates at low Ca(2+) concentrations during the diastolic phase of the cardiac cycle. Inhibits ATP2A2 Ca(2+) affinity by disrupting its allosteric activation by ATP. Modulates the contractility of the heart muscle in response to physiological stimuli via its effects on ATP2A2. Modulates calcium re-uptake during muscle relaxation and plays an important role in calcium homeostasis in the heart muscle. The degree of ATP2A2 inhibition depends on the oligomeric state of PLN. ATP2A2 inhibition is alleviated by PLN phosphorylation. In Gallus gallus (Chicken), this protein is Phospholamban (PLN).